Reading from the N-terminus, the 274-residue chain is MRKVAIYGKGGIGKSTTTQNTVAALAEMGRKVLVVGCDPKADSTRLLLGGLAQKTVLDTLREEGEDVELDLVRKTGFGNTLCVESGGPEPGVGCAGRGIITAVNLMEQLGGYESDSPLDYVFYDVLGDVVCGGFAMPIREGKAEEVYIVCSGEMMAMYAANNICKGIRKFADAGSVKLGGLICNSRMVDNEKEMIAEFAKRLGTQMIHFVPRDNDVQRAEINKKTVIEWNPQAKQADEYRALAKAIDNNQMFVVPKPISVDELESLLVEFGVIS.

ATP is bound at residue 8–15 (GKGGIGKS). C94 is a binding site for [4Fe-4S] cluster. R97 carries the post-translational modification ADP-ribosylarginine; by dinitrogenase reductase ADP-ribosyltransferase. A [4Fe-4S] cluster-binding site is contributed by C131.

Belongs to the NifH/BchL/ChlL family. As to quaternary structure, homodimer. [4Fe-4S] cluster is required as a cofactor. The reversible ADP-ribosylation of Arg-97 inactivates the nitrogenase reductase and regulates nitrogenase activity.

It catalyses the reaction N2 + 8 reduced [2Fe-2S]-[ferredoxin] + 16 ATP + 16 H2O = H2 + 8 oxidized [2Fe-2S]-[ferredoxin] + 2 NH4(+) + 16 ADP + 16 phosphate + 6 H(+). Functionally, the key enzymatic reactions in nitrogen fixation are catalyzed by the nitrogenase complex, which has 2 components: the iron protein and the molybdenum-iron protein. The chain is Nitrogenase iron protein from Dehalococcoides mccartyi (strain ATCC BAA-2266 / KCTC 15142 / 195) (Dehalococcoides ethenogenes (strain 195)).